Consider the following 726-residue polypeptide: Dipeptidyl-peptidase 5 (726 aa).

The first 19 residues, methionine 1–alanine 19, serve as a signal peptide directing secretion. N-linked (GlcNAc...) asparagine glycans are attached at residues asparagine 96 and asparagine 252. The segment at valine 268 to valine 292 is disordered. Asparagine 485 carries an N-linked (GlcNAc...) asparagine glycan. Serine 558 (charge relay system) is an active-site residue. N-linked (GlcNAc...) asparagine glycosylation occurs at asparagine 605. Active-site charge relay system residues include aspartate 641 and histidine 673. Asparagine 699 carries N-linked (GlcNAc...) asparagine glycosylation.

It belongs to the peptidase S9C family.

The protein resides in the secreted. Its function is as follows. Extracellular dipeptidyl-peptidase which removes N-terminal dipeptides sequentially from polypeptides having unsubstituted N-termini. Contributes to pathogenicity. The sequence is that of Dipeptidyl-peptidase 5 (DPP5) from Arthroderma otae (strain ATCC MYA-4605 / CBS 113480) (Microsporum canis).